A 364-amino-acid chain; its full sequence is Aminomethyltransferase (364 aa).

It belongs to the GcvT family. In terms of assembly, the glycine cleavage system is composed of four proteins: P, T, L and H.

It carries out the reaction N(6)-[(R)-S(8)-aminomethyldihydrolipoyl]-L-lysyl-[protein] + (6S)-5,6,7,8-tetrahydrofolate = N(6)-[(R)-dihydrolipoyl]-L-lysyl-[protein] + (6R)-5,10-methylene-5,6,7,8-tetrahydrofolate + NH4(+). In terms of biological role, the glycine cleavage system catalyzes the degradation of glycine. This Shewanella sp. (strain ANA-3) protein is Aminomethyltransferase.